Here is a 310-residue protein sequence, read N- to C-terminus: Dermonecrotic toxin LiSicTox-alphaII2 (310 aa).

An N-terminal signal peptide occupies residues 1-18; the sequence is MLLRIALILGCWSILSEG. A propeptide spanning residues 19-26 is cleaved from the precursor; that stretch reads AENDIAER. The active site involves His38. 2 residues coordinate Mg(2+): Glu58 and Asp60. His74 functions as the Nucleophile in the catalytic mechanism. Intrachain disulfides connect Cys78–Cys84 and Cys80–Cys224. Asn99 carries an N-linked (GlcNAc...) asparagine glycan. Mg(2+) is bound at residue Asp118.

Belongs to the arthropod phospholipase D family. Class II subfamily. It depends on Mg(2+) as a cofactor. In terms of tissue distribution, expressed by the venom gland.

The protein localises to the secreted. It carries out the reaction an N-(acyl)-sphingosylphosphocholine = an N-(acyl)-sphingosyl-1,3-cyclic phosphate + choline. The enzyme catalyses an N-(acyl)-sphingosylphosphoethanolamine = an N-(acyl)-sphingosyl-1,3-cyclic phosphate + ethanolamine. It catalyses the reaction a 1-acyl-sn-glycero-3-phosphocholine = a 1-acyl-sn-glycero-2,3-cyclic phosphate + choline. The catalysed reaction is a 1-acyl-sn-glycero-3-phosphoethanolamine = a 1-acyl-sn-glycero-2,3-cyclic phosphate + ethanolamine. Functionally, dermonecrotic toxins cleave the phosphodiester linkage between the phosphate and headgroup of certain phospholipids (sphingolipid and lysolipid substrates), forming an alcohol (often choline) and a cyclic phosphate. This toxin acts on sphingomyelin (SM). It may also act on ceramide phosphoethanolamine (CPE), lysophosphatidylcholine (LPC) and lysophosphatidylethanolamine (LPE), but not on lysophosphatidylserine (LPS), and lysophosphatidylglycerol (LPG). It acts by transphosphatidylation, releasing exclusively cyclic phosphate products as second products. Induces dermonecrosis, hemolysis, increased vascular permeability, edema, inflammatory response, and platelet aggregation. The polypeptide is Dermonecrotic toxin LiSicTox-alphaII2 (Loxosceles intermedia (Brown spider)).